The chain runs to 550 residues: Acyl-CoA-dependent acyltransferase MAC2 (550 aa).

Belongs to the trichothecene O-acetyltransferase family.

It functions in the pathway secondary metabolite biosynthesis. Its function is as follows. Acyl-CoA-dependent acyltransferase; part of the gene cluster that mediates the biosynthesis of mannosylerythritol lipids (MELs), surface-active substances that enhance the availability of water-insoluble substrates. Depending on the number of acetyl groups, mannosylerythritol lipids can be differentiated into MEL A (fully acetylated), MEL B and MEL C (monoacetylated at R-6 and R-4, respectively), and the fully deacetylated MEL D. The first step in the pathway is the generation of mannosylerythritol by the glycosyltransferase EMT1 which catalyzes the transfer of GDP-mannose to the C-4 atom of meso-erythritol. This reaction has to be stereospecific, since only mannosyl-D-erythritol is generated. The produced disaccharide is subsequently acylated with fatty acids of various lengths by the acyltransferases MAC1 and MAC2 at positions C-2 and C-3, repectively. The existence of MEL derivatives which carry an acetyl group at C-2 implies that at least MAC1 also accepts acetyl-CoA as a donor. The final step of MEL biosynthesis is the acetylation of the fully acylated mannosylerythritol lipids catalyzed by the acetyl-CoA-dependent acetyltransferase MAT1. MAT1 displays a relaxed regioselectivity and is able to transfer acetylgroups to both positions C-4 and C-6 of the mannosyl moiety. This is Acyl-CoA-dependent acyltransferase MAC2 from Pseudozyma antarctica (strain T-34) (Yeast).